The sequence spans 213 residues: tRNA (guanine-N(7)-)-methyltransferase (213 aa).

4 residues coordinate S-adenosyl-L-methionine: E44, E69, D96, and D118. The active site involves D118. Residue K122 coordinates substrate. The segment at 124–129 (RHEKRR) is interaction with RNA. Residues D154 and 191–194 (TEYE) contribute to the substrate site.

It belongs to the class I-like SAM-binding methyltransferase superfamily. TrmB family. As to quaternary structure, homodimer.

It catalyses the reaction guanosine(46) in tRNA + S-adenosyl-L-methionine = N(7)-methylguanosine(46) in tRNA + S-adenosyl-L-homocysteine. It functions in the pathway tRNA modification; N(7)-methylguanine-tRNA biosynthesis. Functionally, catalyzes the formation of N(7)-methylguanine at position 46 (m7G46) in tRNA. The polypeptide is tRNA (guanine-N(7)-)-methyltransferase (Bacillus subtilis (strain 168)).